The chain runs to 1358 residues: Phosphoribosylformylglycinamidine synthase (1358 aa).

Thr2 is modified (N-acetylthreonine). The disordered stretch occupies residues Ala339–Gly363. ATP is bound by residues Gly345–Asp356, Asn424–Tyr426, and Ala719. Mg(2+) is bound by residues Asp720, Glu762, Asn766, and Asp930. Ser932 contacts ATP. Positions Val1093 to Gly1358 constitute a Glutamine amidotransferase type-1 domain. Cys1187 functions as the Nucleophile in the catalytic mechanism. Active-site residues include His1319 and Glu1321.

This sequence in the N-terminal section; belongs to the FGAMS family.

It localises to the cytoplasm. It catalyses the reaction N(2)-formyl-N(1)-(5-phospho-beta-D-ribosyl)glycinamide + L-glutamine + ATP + H2O = 2-formamido-N(1)-(5-O-phospho-beta-D-ribosyl)acetamidine + L-glutamate + ADP + phosphate + H(+). It participates in purine metabolism; IMP biosynthesis via de novo pathway; 5-amino-1-(5-phospho-D-ribosyl)imidazole from N(2)-formyl-N(1)-(5-phospho-D-ribosyl)glycinamide: step 1/2. Its function is as follows. Phosphoribosylformylglycinamidine synthase involved in the purines biosynthetic pathway. Catalyzes the ATP-dependent conversion of formylglycinamide ribonucleotide (FGAR) and glutamine to yield formylglycinamidine ribonucleotide (FGAM) and glutamate. In Saccharomyces cerevisiae (strain ATCC 204508 / S288c) (Baker's yeast), this protein is Phosphoribosylformylglycinamidine synthase (ADE6).